A 993-amino-acid chain; its full sequence is NACHT, LRR and PYD domains-containing protein 14 (993 aa).

Residues 81–403 (QTVVLQGAAG…FYLLRENLEE (323 aa)) enclose the NACHT domain. ATP is bound at residue 87–94 (GAAGIGKT). 9 LRR repeats span residues 636-657 (DLKE…LKCK), 660-680 (KLRV…QKLS), 688-708 (SLVF…KSLC), 717-738 (SLER…VLSS), 745-765 (RLTH…KLLS), 774-795 (TLQS…HLST), 802-822 (SLVH…KLLC), 831-852 (NLQE…DLAS), and 859-879 (NLWS…NILC).

The protein belongs to the NLRP family. Detected in adult ovary and testis. Detected in oocytes and in germ cell elements in seminiferous tubules in adult testis (at protein level).

The protein resides in the cytoplasm. Functionally, may be involved in inflammation and spermatogenesis. This is NACHT, LRR and PYD domains-containing protein 14 (Nlrp14) from Mus musculus (Mouse).